Here is a 95-residue protein sequence, read N- to C-terminus: Aspartyl/glutamyl-tRNA(Asn/Gln) amidotransferase subunit C (95 aa).

It belongs to the GatC family. As to quaternary structure, heterotrimer of A, B and C subunits.

It carries out the reaction L-glutamyl-tRNA(Gln) + L-glutamine + ATP + H2O = L-glutaminyl-tRNA(Gln) + L-glutamate + ADP + phosphate + H(+). The catalysed reaction is L-aspartyl-tRNA(Asn) + L-glutamine + ATP + H2O = L-asparaginyl-tRNA(Asn) + L-glutamate + ADP + phosphate + 2 H(+). In terms of biological role, allows the formation of correctly charged Asn-tRNA(Asn) or Gln-tRNA(Gln) through the transamidation of misacylated Asp-tRNA(Asn) or Glu-tRNA(Gln) in organisms which lack either or both of asparaginyl-tRNA or glutaminyl-tRNA synthetases. The reaction takes place in the presence of glutamine and ATP through an activated phospho-Asp-tRNA(Asn) or phospho-Glu-tRNA(Gln). The sequence is that of Aspartyl/glutamyl-tRNA(Asn/Gln) amidotransferase subunit C from Desulfosudis oleivorans (strain DSM 6200 / JCM 39069 / Hxd3) (Desulfococcus oleovorans).